An 828-amino-acid polypeptide reads, in one-letter code: DNA gyrase subunit A (828 aa).

A Topo IIA-type catalytic domain is found at L32–L497. Y120 acts as the O-(5'-phospho-DNA)-tyrosine intermediate in catalysis. Residues Q524 to G530 carry the GyrA-box motif.

It belongs to the type II topoisomerase GyrA/ParC subunit family. As to quaternary structure, heterotetramer, composed of two GyrA and two GyrB chains. In the heterotetramer, GyrA contains the active site tyrosine that forms a transient covalent intermediate with DNA, while GyrB binds cofactors and catalyzes ATP hydrolysis.

It is found in the cytoplasm. It catalyses the reaction ATP-dependent breakage, passage and rejoining of double-stranded DNA.. Its function is as follows. A type II topoisomerase that negatively supercoils closed circular double-stranded (ds) DNA in an ATP-dependent manner to modulate DNA topology and maintain chromosomes in an underwound state. Negative supercoiling favors strand separation, and DNA replication, transcription, recombination and repair, all of which involve strand separation. Also able to catalyze the interconversion of other topological isomers of dsDNA rings, including catenanes and knotted rings. Type II topoisomerases break and join 2 DNA strands simultaneously in an ATP-dependent manner. The chain is DNA gyrase subunit A from Streptococcus pyogenes serotype M6 (strain ATCC BAA-946 / MGAS10394).